We begin with the raw amino-acid sequence, 223 residues long: SCMKAAPMKEVSIRGQGSLAYPGLRTQGNLETLSGPNDATRGLTSLADTFEHVIEELLDEQQAIQPSKENKDADLYSTRVMLSSQVPLEPPLLFLLEEYKNYLDAANMSMRVRRHSDPARRGELSVCDSTSEWVTAAEKKTAVDMSGATVTVLEKVPVPKGQLKQYFYETKCSSKGYAKEGCRGIDKRYWNSQCRTTQSFVRALTMDNKKRVGWRFIRIDTSC.

A signal peptide spans Ser1–Ala5. Positions Ala6–Arg114 are excised as a propeptide. Asn107 carries an N-linked (GlcNAc...) asparagine glycan. 2 disulfide bridges follow: Cys127-Cys194 and Cys172-Cys223.

It belongs to the NGF-beta family.

The protein resides in the secreted. Functionally, promotes the survival of neuronal populations that are all located either in the central nervous system or directly connected to it. The polypeptide is Neurotrophic factor BDNF precursor form (BDNF) (Eryx johnii (Indian red sand boa)).